Reading from the N-terminus, the 277-residue chain is 2-dehydro-3-deoxyphosphooctonate aldolase (277 aa).

This sequence belongs to the KdsA family.

Its subcellular location is the cytoplasm. It catalyses the reaction D-arabinose 5-phosphate + phosphoenolpyruvate + H2O = 3-deoxy-alpha-D-manno-2-octulosonate-8-phosphate + phosphate. It functions in the pathway carbohydrate biosynthesis; 3-deoxy-D-manno-octulosonate biosynthesis; 3-deoxy-D-manno-octulosonate from D-ribulose 5-phosphate: step 2/3. Its pathway is bacterial outer membrane biogenesis; lipopolysaccharide biosynthesis. This is 2-dehydro-3-deoxyphosphooctonate aldolase from Brucella abortus (strain S19).